Consider the following 326-residue polypeptide: Putative [LysW]-lysine/[LysW]-ornithine hydrolase (326 aa).

H66 provides a ligand contact to Zn(2+). The active site involves D68. D90 is a binding site for Zn(2+). The active-site Proton acceptor is E117. Zn(2+) contacts are provided by E118, E139, and H297.

This sequence belongs to the peptidase M20A family. LysK subfamily. Zn(2+) is required as a cofactor. Co(2+) serves as cofactor.

Its subcellular location is the cytoplasm. It carries out the reaction [amino-group carrier protein]-C-terminal-gamma-(L-lysyl)-L-glutamate + H2O = [amino-group carrier protein]-C-terminal-L-glutamate + L-lysine. The enzyme catalyses [amino-group carrier protein]-C-terminal-gamma-(L-ornithyl)-L-glutamate + H2O = [amino-group carrier protein]-C-terminal-L-glutamate + L-ornithine. The protein operates within amino-acid biosynthesis; L-lysine biosynthesis via AAA pathway; L-lysine from L-alpha-aminoadipate (Thermus route): step 5/5. Its pathway is amino-acid biosynthesis; L-arginine biosynthesis. Catalyzes the release of L-lysine from [LysW]-gamma-L-lysine and the release of L-ornithine from [LysW]-L-ornithine. This is Putative [LysW]-lysine/[LysW]-ornithine hydrolase from Pyrococcus furiosus (strain ATCC 43587 / DSM 3638 / JCM 8422 / Vc1).